The chain runs to 196 residues: Phosphoheptose isomerase (196 aa).

Residues 36–195 (VIQAYKLGKK…EKELFGEKVD (160 aa)) enclose the SIS domain. Position 51–53 (51–53 (NGG)) interacts with substrate. 2 residues coordinate Zn(2+): histidine 60 and glutamate 64. Substrate contacts are provided by residues glutamate 64, 93-94 (ND), 119-121 (STS), serine 124, and glutamine 171. The Zn(2+) site is built by glutamine 171 and histidine 179.

This sequence belongs to the SIS family. GmhA subfamily. Requires Zn(2+) as cofactor.

It is found in the cytoplasm. It catalyses the reaction 2 D-sedoheptulose 7-phosphate = D-glycero-alpha-D-manno-heptose 7-phosphate + D-glycero-beta-D-manno-heptose 7-phosphate. The protein operates within carbohydrate biosynthesis; D-glycero-D-manno-heptose 7-phosphate biosynthesis; D-glycero-alpha-D-manno-heptose 7-phosphate and D-glycero-beta-D-manno-heptose 7-phosphate from sedoheptulose 7-phosphate: step 1/1. In terms of biological role, catalyzes the isomerization of sedoheptulose 7-phosphate in D-glycero-D-manno-heptose 7-phosphate. The chain is Phosphoheptose isomerase from Clostridium acetobutylicum (strain ATCC 824 / DSM 792 / JCM 1419 / IAM 19013 / LMG 5710 / NBRC 13948 / NRRL B-527 / VKM B-1787 / 2291 / W).